Consider the following 286-residue polypeptide: Putative sensory transducer protein YfmS (286 aa).

The Methyl-accepting transducer domain occupies 68 to 286; it reads ITDAIRSNQK…KMAEKALEEE (219 aa).

This sequence belongs to the methyl-accepting chemotaxis (MCP) protein family.

Chemotactic-signal transducers respond to changes in the concentration of attractants and repellents in the environment, transduce a signal from the outside to the inside of the cell, and facilitate sensory adaptation through the variation of the level of methylation. Attractants increase the level of methylation while repellents decrease the level of methylation. The polypeptide is Putative sensory transducer protein YfmS (yfmS) (Bacillus subtilis (strain 168)).